Here is a 92-residue protein sequence, read N- to C-terminus: Small ribosomal subunit protein uS19 (92 aa).

Belongs to the universal ribosomal protein uS19 family.

Functionally, protein S19 forms a complex with S13 that binds strongly to the 16S ribosomal RNA. This chain is Small ribosomal subunit protein uS19, found in Rhodopseudomonas palustris (strain HaA2).